We begin with the raw amino-acid sequence, 516 residues long: Cysteine--tRNA ligase (516 aa).

Cysteine 34 provides a ligand contact to Zn(2+). The short motif at 36-46 (PTVYNFAHLGN) is the 'HIGH' region element. Cysteine 225, histidine 250, and glutamate 254 together coordinate Zn(2+). The short motif at 285–289 (KMSKS) is the 'KMSKS' region element. Residue lysine 288 coordinates ATP.

Belongs to the class-I aminoacyl-tRNA synthetase family. In terms of assembly, monomer. Zn(2+) is required as a cofactor.

It is found in the cytoplasm. It carries out the reaction tRNA(Cys) + L-cysteine + ATP = L-cysteinyl-tRNA(Cys) + AMP + diphosphate. This is Cysteine--tRNA ligase from Zymomonas mobilis subsp. mobilis (strain ATCC 31821 / ZM4 / CP4).